Consider the following 211-residue polypeptide: Beta-crystallin B3 (211 aa).

Position 1 is an N-acetylmethionine (Met1). Ala2 carries the N-acetylalanine; in Beta-crystallin B3, N-terminally processed modification. An N-terminal arm region spans residues 2–23; it reads AEQHGAPEQAAAGKSHGDLGGS. Beta/gamma crystallin 'Greek key' domains follow at residues 24-63 and 64-108; these read YKVI…QVES and GPWL…RPLN. The connecting peptide stretch occupies residues 109-113; that stretch reads IDSPH. Beta/gamma crystallin 'Greek key' domains are found at residues 114–155 and 156–198; these read HKLH…RAIN and GTWV…RRIR. The tract at residues 200–211 is C-terminal arm; the sequence is QKWHKRGRFPSS.

The protein belongs to the beta/gamma-crystallin family. Homo/heterodimer, or complexes of higher-order. The structure of beta-crystallin oligomers seems to be stabilized through interactions between the N-terminal arms.

Functionally, crystallins are the dominant structural components of the vertebrate eye lens. In Homo sapiens (Human), this protein is Beta-crystallin B3 (CRYBB3).